The primary structure comprises 376 residues: UDP-N-acetylglucosamine--N-acetylmuramyl-(pentapeptide) pyrophosphoryl-undecaprenol N-acetylglucosamine transferase (376 aa).

UDP-N-acetyl-alpha-D-glucosamine contacts are provided by residues 11-13 (TGG), Asn-117, Arg-160, Ser-208, and Gln-310.

Belongs to the glycosyltransferase 28 family. MurG subfamily.

It is found in the cell inner membrane. It carries out the reaction di-trans,octa-cis-undecaprenyl diphospho-N-acetyl-alpha-D-muramoyl-L-alanyl-D-glutamyl-meso-2,6-diaminopimeloyl-D-alanyl-D-alanine + UDP-N-acetyl-alpha-D-glucosamine = di-trans,octa-cis-undecaprenyl diphospho-[N-acetyl-alpha-D-glucosaminyl-(1-&gt;4)]-N-acetyl-alpha-D-muramoyl-L-alanyl-D-glutamyl-meso-2,6-diaminopimeloyl-D-alanyl-D-alanine + UDP + H(+). Its pathway is cell wall biogenesis; peptidoglycan biosynthesis. In terms of biological role, cell wall formation. Catalyzes the transfer of a GlcNAc subunit on undecaprenyl-pyrophosphoryl-MurNAc-pentapeptide (lipid intermediate I) to form undecaprenyl-pyrophosphoryl-MurNAc-(pentapeptide)GlcNAc (lipid intermediate II). The sequence is that of UDP-N-acetylglucosamine--N-acetylmuramyl-(pentapeptide) pyrophosphoryl-undecaprenol N-acetylglucosamine transferase from Rickettsia africae (strain ESF-5).